The chain runs to 139 residues: Insulin-like growth factor (139 aa).

A signal peptide spans 1–38 (YIRRVRQGSIYSLLVESQQWCKLTLTLLLLLALLTRCT). Residues 39–67 (LSETLCGSELVDTLQFVCDDRGFFFVPQH) form a b region. Residues 68–82 (VPPRRGAHRRSRARK) form a c region. Residues 83-103 (GIVEECCFKGCSLRLLEMYCA) are a. Residues 104 to 113 (RPSKAERDVA) form a d region. Positions 108–139 (AERDVARPRQRPHRASQHSRRGSQSRGRGRSR) are disordered. Residues 114–139 (RPRQRPHRASQHSRRGSQSRGRGRSR) are e. Residues 115 to 139 (PRQRPHRASQHSRRGSQSRGRGRSR) are compositionally biased toward basic residues.

It belongs to the insulin family.

It localises to the secreted. The insulin-like growth factors, isolated from plasma, are structurally and functionally related to insulin but have a much higher growth-promoting activity. In Myxine glutinosa (Atlantic hagfish), this protein is Insulin-like growth factor.